The sequence spans 79 residues: Immunity protein CdiI (79 aa).

2 helical membrane-spanning segments follow: residues 12–32 and 51–71; these read IIFF…IGLI and VVLF…LGLW.

In terms of assembly, probably interacts with cognate toxin CdiA.

The protein localises to the cell inner membrane. In terms of biological role, immunity protein component of a toxin-immunity protein module, which functions as a cellular contact-dependent growth inhibition (CDI) system. CDI modules allow bacteria to communicate with and inhibit the growth of closely related neighboring bacteria in a contact-dependent fashion. Protects cells against CdiA from the same strain, its cognate toxin protein. Growth inhibition is reversible upon induction of this protein, occurring about 2.5 hours after induction, and requires an energy source. Does not protect against non-cognate CdiA from E.coli strain 563 / UPEC, D.dadantii strain 3937 or Y.pestis strain CO92. In Escherichia coli, this protein is Immunity protein CdiI.